We begin with the raw amino-acid sequence, 187 residues long: Calcium and integrin-binding family member 2 (187 aa).

3 consecutive EF-hand domains span residues 66 to 101, 103 to 138, and 144 to 179; these read KENP…LSEM, PREL…LTKE, and EVNL…APDF. Ca(2+) is bound by residues aspartate 157, aspartate 159, aspartate 161, lysine 163, and aspartate 168.

In terms of assembly, monomer. Homodimer. As to expression, enriched in central and striolar hair cells.

The protein resides in the cytoplasm. Its subcellular location is the cell projection. It localises to the stereocilium. The protein localises to the photoreceptor inner segment. It is found in the cilium. The protein resides in the photoreceptor outer segment. Its subcellular location is the cell membrane. It localises to the sarcolemma. In terms of biological role, calcium- and integrin-binding protein. Plays a role in intracellular calcium homeostasis. Critical for proper photoreceptor cell maintenance and function. Essential for development, maintenance and function of mechanosensory hair cells. The chain is Calcium and integrin-binding family member 2 from Danio rerio (Zebrafish).